The primary structure comprises 420 residues: Deoxyribodipyrimidine photo-lyase (420 aa).

The 123-residue stretch at 2-124 (GPLLVWHRGD…PLHLLPAPHL (123 aa)) folds into the Photolyase/cryptochrome alpha/beta domain. The segment at 152–175 (APEALPKGPEEGEIPREDPGLPLP) is disordered. Positions 159–170 (GPEEGEIPREDP) are enriched in basic and acidic residues. Tyr-197 is an FAD binding site. Arg-201 is a binding site for DNA. 209-213 (GSRLS) contacts FAD. 2 interaction with DNA regions span residues 244 to 251 (ELLWRDFS) and 310 to 311 (NR). 341-343 (DGD) provides a ligand contact to FAD. Gln-373 is a binding site for DNA.

Belongs to the DNA photolyase class-1 family. As to quaternary structure, monomer. FAD is required as a cofactor.

The enzyme catalyses cyclobutadipyrimidine (in DNA) = 2 pyrimidine residues (in DNA).. Involved in repair of UV radiation-induced DNA damage. Catalyzes the light-dependent monomerization (300-600 nm) of cyclobutyl pyrimidine dimers (in cis-syn configuration), which are formed between adjacent bases on the same DNA strand upon exposure to ultraviolet radiation. The protein is Deoxyribodipyrimidine photo-lyase (phr) of Thermus thermophilus (strain ATCC BAA-163 / DSM 7039 / HB27).